A 258-amino-acid polypeptide reads, in one-letter code: UPF0246 protein CGSHiGG_08495 (258 aa).

This sequence belongs to the UPF0246 family.

The protein is UPF0246 protein CGSHiGG_08495 of Haemophilus influenzae (strain PittGG).